Consider the following 246-residue polypeptide: Bis(5'-nucleosyl)-tetraphosphatase PrpE [asymmetrical] (246 aa).

It belongs to the PrpE family. Ni(2+) is required as a cofactor.

It carries out the reaction P(1),P(4)-bis(5'-guanosyl) tetraphosphate + H2O = GMP + GTP + 2 H(+). In terms of biological role, asymmetrically hydrolyzes Ap4p to yield AMP and ATP. This chain is Bis(5'-nucleosyl)-tetraphosphatase PrpE [asymmetrical], found in Bacillus cereus (strain B4264).